The chain runs to 103 residues: Large ribosomal subunit protein bL21 (103 aa).

It belongs to the bacterial ribosomal protein bL21 family. As to quaternary structure, part of the 50S ribosomal subunit. Contacts protein L20.

In terms of biological role, this protein binds to 23S rRNA in the presence of protein L20. This is Large ribosomal subunit protein bL21 from Haemophilus influenzae (strain 86-028NP).